Reading from the N-terminus, the 448-residue chain is Trigger factor (448 aa).

Residues 167 to 253 form the PPIase FKBP-type domain; the sequence is GSIVRVDFVE…IKDIKKRDIP (87 aa).

The protein belongs to the FKBP-type PPIase family. Tig subfamily.

The protein localises to the cytoplasm. The catalysed reaction is [protein]-peptidylproline (omega=180) = [protein]-peptidylproline (omega=0). Its function is as follows. Involved in protein export. Acts as a chaperone by maintaining the newly synthesized protein in an open conformation. Functions as a peptidyl-prolyl cis-trans isomerase. The sequence is that of Trigger factor from Borrelia hermsii (strain HS1 / DAH).